Reading from the N-terminus, the 157-residue chain is Succinate dehydrogenase assembly factor 2-B, mitochondrial (157 aa).

A mitochondrion-targeting transit peptide spans 1–24; that stretch reads MLRQFLFSTASRRLVRPMIAPHRS.

It belongs to the SDHAF2 family. In terms of assembly, interacts with the flavoprotein subunit within the SDH catalytic dimer.

The protein localises to the mitochondrion matrix. In terms of biological role, plays an essential role in the assembly of succinate dehydrogenase (SDH), an enzyme complex (also referred to as respiratory complex II) that is a component of both the tricarboxylic acid (TCA) cycle and the mitochondrial electron transport chain, and which couples the oxidation of succinate to fumarate with the reduction of ubiquinone (coenzyme Q) to ubiquinol. Required for flavinylation (covalent attachment of FAD) of the flavoprotein subunit of the SDH catalytic dimer. The chain is Succinate dehydrogenase assembly factor 2-B, mitochondrial from Drosophila persimilis (Fruit fly).